The chain runs to 336 residues: Biotin synthase (336 aa).

A Radical SAM core domain is found at 54–281; it reads NAIQLSTLLS…KAMVRLSAGR (228 aa). Positions 69, 73, and 76 each coordinate [4Fe-4S] cluster. [2Fe-2S] cluster contacts are provided by Cys-113, Cys-144, Cys-204, and Arg-276.

It belongs to the radical SAM superfamily. Biotin synthase family. As to quaternary structure, homodimer. Requires [4Fe-4S] cluster as cofactor. [2Fe-2S] cluster is required as a cofactor.

The catalysed reaction is (4R,5S)-dethiobiotin + (sulfur carrier)-SH + 2 reduced [2Fe-2S]-[ferredoxin] + 2 S-adenosyl-L-methionine = (sulfur carrier)-H + biotin + 2 5'-deoxyadenosine + 2 L-methionine + 2 oxidized [2Fe-2S]-[ferredoxin]. It functions in the pathway cofactor biosynthesis; biotin biosynthesis; biotin from 7,8-diaminononanoate: step 2/2. In terms of biological role, catalyzes the conversion of dethiobiotin (DTB) to biotin by the insertion of a sulfur atom into dethiobiotin via a radical-based mechanism. The protein is Biotin synthase of Burkholderia pseudomallei (strain 1106a).